Reading from the N-terminus, the 120-residue chain is Large ribosomal subunit protein bL12 (120 aa).

This sequence belongs to the bacterial ribosomal protein bL12 family. Homodimer. Part of the ribosomal stalk of the 50S ribosomal subunit. Forms a multimeric L10(L12)X complex, where L10 forms an elongated spine to which 2 to 4 L12 dimers bind in a sequential fashion. Binds GTP-bound translation factors.

Its function is as follows. Forms part of the ribosomal stalk which helps the ribosome interact with GTP-bound translation factors. Is thus essential for accurate translation. This chain is Large ribosomal subunit protein bL12, found in Alkaliphilus metalliredigens (strain QYMF).